Reading from the N-terminus, the 164-residue chain is CASP-like protein 1C1 (164 aa).

At 1 to 15 (MGDVEIPPLVKQIVR) the chain is on the cytoplasmic side. A helical transmembrane segment spans residues 16–36 (GLRGLAFLATILATSFMAASH). The Extracellular segment spans residues 37–56 (ERAIFPFDYKADYTDLMLFK). The chain crosses the membrane as a helical span at residues 57-77 (AFLGANIAASLYSFFFVCLPP). Residues 78–83 (KSLLWR) lie on the Cytoplasmic side of the membrane. Residues 84–104 (LAIVLDVIMFGLLVAMDSAAI) traverse the membrane as a helical segment. The Extracellular portion of the chain corresponds to 105 to 132 (AAAYLHKHGDSQAFWPPICSQVPTYCYR). The helical transmembrane segment at 133-153 (VILAISIGFGGVFMFLLIIII) threads the bilayer. Residues 154-164 (SISVILNPLLV) lie on the Cytoplasmic side of the membrane.

Belongs to the Casparian strip membrane proteins (CASP) family. As to quaternary structure, homodimer and heterodimers.

The protein localises to the cell membrane. In Populus trichocarpa (Western balsam poplar), this protein is CASP-like protein 1C1.